The chain runs to 702 residues: 1,4-alpha-glucan-branching enzyme (702 aa).

Position 2 is an N-acetylalanine (Ala-2). Residues 62-63 and 91-93 each bind substrate; these read NE and WAP. Trp-107 contacts (1,4-alpha-D-glucosyl)n. 118–121 serves as a coordination point for substrate; the sequence is EYGK. Lys-143 provides a ligand contact to (1,4-alpha-D-glucosyl)n. Tyr-173 carries the phosphotyrosine modification. 333–336 serves as a coordination point for substrate; that stretch reads EVLR. The active-site Nucleophile is the Asp-357. Glu-412 functions as the Proton donor in the catalytic mechanism.

This sequence belongs to the glycosyl hydrolase 13 family. GlgB subfamily. Monomer.

The enzyme catalyses Transfers a segment of a (1-&gt;4)-alpha-D-glucan chain to a primary hydroxy group in a similar glucan chain.. The protein operates within glycan biosynthesis; glycogen biosynthesis. In terms of biological role, glycogen-branching enzyme participates in the glycogen biosynthetic process along with glycogenin and glycogen synthase. Generates alpha-1,6-glucosidic branches from alpha-1,4-linked glucose chains, to increase solubility of the glycogen polymer. The sequence is that of 1,4-alpha-glucan-branching enzyme (Gbe1) from Mus musculus (Mouse).